A 249-amino-acid polypeptide reads, in one-letter code: Orotidine 5'-phosphate decarboxylase (249 aa).

Substrate contacts are provided by residues Asp18, Lys40, 67–76 (DLKYHDIPNT), Thr127, Arg188, Gln197, Gly217, and Arg218. Residue Lys69 is the Proton donor of the active site.

The protein belongs to the OMP decarboxylase family. Type 1 subfamily. As to quaternary structure, homodimer.

It catalyses the reaction orotidine 5'-phosphate + H(+) = UMP + CO2. The protein operates within pyrimidine metabolism; UMP biosynthesis via de novo pathway; UMP from orotate: step 2/2. Catalyzes the decarboxylation of orotidine 5'-monophosphate (OMP) to uridine 5'-monophosphate (UMP). The protein is Orotidine 5'-phosphate decarboxylase of Baumannia cicadellinicola subsp. Homalodisca coagulata.